Reading from the N-terminus, the 199-residue chain is Pre T-cell antigen receptor alpha (199 aa).

An N-terminal signal peptide occupies residues 1 to 16 (MARTWLLLFLGLRCQA). At 17 to 155 (LPSGIAGTPF…RQVLRLSVLR (139 aa)) the chain is on the extracellular side. Cys-47 and Cys-107 are oxidised to a cystine. Residues Asn-67 and Asn-117 are each glycosylated (N-linked (GlcNAc...) asparagine). The tract at residues 117–139 (NRSTHPLQLSGEEASTDRTCPQE) is disordered. The chain crosses the membrane as a helical span at residues 156–176 (LLLFKLLLLDVFLTCSRLCVL). Residues 177 to 199 (AGQHLLPPPSSKQAPASTHQSWT) lie on the Cytoplasmic side of the membrane.

As to quaternary structure, heterodimer with TCRB; disulfide linked. This heterodimer assembles with CD3 proteins into a signaling-competent pre-T-cell receptor complex. Interacts with RHBDD1. In terms of tissue distribution, found in CD45+ but not in the CD45- fetal liver cells.

It localises to the membrane. Its subcellular location is the cell membrane. In terms of biological role, component of the pre-T-cell receptor complex (composed of PTCRA, TCRB and the CD3 complex) that has a crucial role in early T-cell development, particularly alpha-beta T cell differentiation. This is Pre T-cell antigen receptor alpha from Rattus norvegicus (Rat).